Reading from the N-terminus, the 748-residue chain is Catalase-peroxidase (748 aa).

The tryptophyl-tyrosyl-methioninium (Trp-Tyr) (with M-268) cross-link spans 91 to 242 (WHSAGTYRIG…LAAVQMGLIY (152 aa)). The Proton acceptor role is filled by histidine 92. A disordered region spans residues 194–223 (DRYGKGKGSSSQGEIPADAHRHGQEQARTA). A cross-link (tryptophyl-tyrosyl-methioninium (Tyr-Met) (with W-91)) is located at residues 242 to 268 (YVNPEGPEGNPDPLAAAHDIRETFARM). Heme b is bound at residue histidine 283. Positions 288-310 (THGAGDAKHVGREPEGEDMDSQG) are disordered. The segment covering 290–301 (GAGDAKHVGREP) has biased composition (basic and acidic residues).

Belongs to the peroxidase family. Peroxidase/catalase subfamily. As to quaternary structure, homodimer or homotetramer. Requires heme b as cofactor. Post-translationally, formation of the three residue Trp-Tyr-Met cross-link is important for the catalase, but not the peroxidase activity of the enzyme.

The catalysed reaction is H2O2 + AH2 = A + 2 H2O. It carries out the reaction 2 H2O2 = O2 + 2 H2O. In terms of biological role, bifunctional enzyme with both catalase and broad-spectrum peroxidase activity. This Herbaspirillum seropedicae protein is Catalase-peroxidase.